The chain runs to 466 residues: 3-isopropylmalate dehydratase large subunit (466 aa).

The [4Fe-4S] cluster site is built by Cys-347, Cys-407, and Cys-410.

This sequence belongs to the aconitase/IPM isomerase family. LeuC type 1 subfamily. As to quaternary structure, heterodimer of LeuC and LeuD. [4Fe-4S] cluster is required as a cofactor.

The catalysed reaction is (2R,3S)-3-isopropylmalate = (2S)-2-isopropylmalate. It participates in amino-acid biosynthesis; L-leucine biosynthesis; L-leucine from 3-methyl-2-oxobutanoate: step 2/4. Functionally, catalyzes the isomerization between 2-isopropylmalate and 3-isopropylmalate, via the formation of 2-isopropylmaleate. The chain is 3-isopropylmalate dehydratase large subunit from Escherichia coli O139:H28 (strain E24377A / ETEC).